The following is a 457-amino-acid chain: Chromosomal replication initiator protein DnaA (457 aa).

Positions M1 to A90 are domain I, interacts with DnaA modulators. The disordered stretch occupies residues G79–S120. A compositionally biased stretch (low complexity) spans A84–P99. A domain II region spans residues P91 to S120. Residues N121 to A337 form a domain III, AAA+ region region. 4 residues coordinate ATP: G165, G167, K168, and T169. The interval N338–S457 is domain IV, binds dsDNA.

This sequence belongs to the DnaA family. In terms of assembly, oligomerizes as a right-handed, spiral filament on DNA at oriC.

It localises to the cytoplasm. Functionally, plays an essential role in the initiation and regulation of chromosomal replication. ATP-DnaA binds to the origin of replication (oriC) to initiate formation of the DNA replication initiation complex once per cell cycle. Binds the DnaA box (a 9 base pair repeat at the origin) and separates the double-stranded (ds)DNA. Forms a right-handed helical filament on oriC DNA; dsDNA binds to the exterior of the filament while single-stranded (ss)DNA is stabiized in the filament's interior. The ATP-DnaA-oriC complex binds and stabilizes one strand of the AT-rich DNA unwinding element (DUE), permitting loading of DNA polymerase. After initiation quickly degrades to an ADP-DnaA complex that is not apt for DNA replication. Binds acidic phospholipids. In Shewanella amazonensis (strain ATCC BAA-1098 / SB2B), this protein is Chromosomal replication initiator protein DnaA.